The following is a 100-amino-acid chain: NADH-quinone oxidoreductase subunit K (100 aa).

3 helical membrane passes run 2-22 (ITLTHYLILSAILFSIALVGI), 29-49 (LMLFFATEIALNAVNIALAAF), and 63-83 (FFIIAIAASEVAVGLGLLIIW).

The protein belongs to the complex I subunit 4L family. NDH-1 is composed of 14 different subunits. Subunits NuoA, H, J, K, L, M, N constitute the membrane sector of the complex.

It is found in the cell inner membrane. The enzyme catalyses a quinone + NADH + 5 H(+)(in) = a quinol + NAD(+) + 4 H(+)(out). NDH-1 shuttles electrons from NADH, via FMN and iron-sulfur (Fe-S) centers, to quinones in the respiratory chain. The immediate electron acceptor for the enzyme in this species is believed to be ubiquinone. Couples the redox reaction to proton translocation (for every two electrons transferred, four hydrogen ions are translocated across the cytoplasmic membrane), and thus conserves the redox energy in a proton gradient. This chain is NADH-quinone oxidoreductase subunit K, found in Nitratiruptor sp. (strain SB155-2).